Reading from the N-terminus, the 722-residue chain is Formin-like protein 16 (722 aa).

4 disordered regions span residues 1 to 56 (MSPV…PMFD), 564 to 606 (ATED…PSRP), 635 to 672 (VGSP…HLSH), and 690 to 722 (PLLV…LRYQ). The span at 22-55 (PLPPPPPPPMRRSAPSPPPMSGRVPPPPPPPPMF) shows a compositional bias: pro residues. Residues 182 to 571 (FRCPVTKRSS…KAATEDVFGG (390 aa)) form the FH2 domain. Composition is skewed to pro residues over residues 593–605 (IRPP…PPSR), 638–658 (PSPP…PPPM), and 709–722 (APPP…LRYQ).

The protein belongs to the formin-like family. Class-II subfamily.

The polypeptide is Formin-like protein 16 (FH16) (Arabidopsis thaliana (Mouse-ear cress)).